A 130-amino-acid polypeptide reads, in one-letter code: Small ribosomal subunit protein uS9 (130 aa).

It belongs to the universal ribosomal protein uS9 family.

In Saccharophagus degradans (strain 2-40 / ATCC 43961 / DSM 17024), this protein is Small ribosomal subunit protein uS9.